Consider the following 216-residue polypeptide: Thiamine-phosphate synthase (216 aa).

4-amino-2-methyl-5-(diphosphooxymethyl)pyrimidine-binding positions include 35-39 and Asn-67; that span reads QLRDK. Mg(2+) is bound by residues Asp-68 and Asp-87. Ser-106 contacts 4-amino-2-methyl-5-(diphosphooxymethyl)pyrimidine. Position 132–134 (132–134) interacts with 2-[(2R,5Z)-2-carboxy-4-methylthiazol-5(2H)-ylidene]ethyl phosphate; sequence TSS. A 4-amino-2-methyl-5-(diphosphooxymethyl)pyrimidine-binding site is contributed by Lys-135. Residues Gly-163 and 183-184 contribute to the 2-[(2R,5Z)-2-carboxy-4-methylthiazol-5(2H)-ylidene]ethyl phosphate site; that span reads IS.

The protein belongs to the thiamine-phosphate synthase family. Requires Mg(2+) as cofactor.

The catalysed reaction is 2-[(2R,5Z)-2-carboxy-4-methylthiazol-5(2H)-ylidene]ethyl phosphate + 4-amino-2-methyl-5-(diphosphooxymethyl)pyrimidine + 2 H(+) = thiamine phosphate + CO2 + diphosphate. The enzyme catalyses 2-(2-carboxy-4-methylthiazol-5-yl)ethyl phosphate + 4-amino-2-methyl-5-(diphosphooxymethyl)pyrimidine + 2 H(+) = thiamine phosphate + CO2 + diphosphate. It carries out the reaction 4-methyl-5-(2-phosphooxyethyl)-thiazole + 4-amino-2-methyl-5-(diphosphooxymethyl)pyrimidine + H(+) = thiamine phosphate + diphosphate. Its pathway is cofactor biosynthesis; thiamine diphosphate biosynthesis; thiamine phosphate from 4-amino-2-methyl-5-diphosphomethylpyrimidine and 4-methyl-5-(2-phosphoethyl)-thiazole: step 1/1. In terms of biological role, condenses 4-methyl-5-(beta-hydroxyethyl)thiazole monophosphate (THZ-P) and 2-methyl-4-amino-5-hydroxymethyl pyrimidine pyrophosphate (HMP-PP) to form thiamine monophosphate (TMP). In Methanoregula boonei (strain DSM 21154 / JCM 14090 / 6A8), this protein is Thiamine-phosphate synthase.